The chain runs to 426 residues: Kynureninase (426 aa).

Residues L110, S111, 138-141 (FPSD), D223, H226, and Y248 contribute to the pyridoxal 5'-phosphate site. K249 bears the N6-(pyridoxal phosphate)lysine mark. Pyridoxal 5'-phosphate-binding residues include W279 and N307.

The protein belongs to the kynureninase family. As to quaternary structure, homodimer. Pyridoxal 5'-phosphate is required as a cofactor.

The enzyme catalyses L-kynurenine + H2O = anthranilate + L-alanine + H(+). The catalysed reaction is 3-hydroxy-L-kynurenine + H2O = 3-hydroxyanthranilate + L-alanine + H(+). It functions in the pathway amino-acid degradation; L-kynurenine degradation; L-alanine and anthranilate from L-kynurenine: step 1/1. Its pathway is cofactor biosynthesis; NAD(+) biosynthesis; quinolinate from L-kynurenine: step 2/3. In terms of biological role, catalyzes the cleavage of L-kynurenine (L-Kyn) and L-3-hydroxykynurenine (L-3OHKyn) into anthranilic acid (AA) and 3-hydroxyanthranilic acid (3-OHAA), respectively. The protein is Kynureninase of Myxococcus xanthus (strain DK1622).